Consider the following 393-residue polypeptide: Lipid-A-disaccharide synthase (393 aa).

It belongs to the LpxB family.

It catalyses the reaction a lipid X + a UDP-2-N,3-O-bis[(3R)-3-hydroxyacyl]-alpha-D-glucosamine = a lipid A disaccharide + UDP + H(+). It functions in the pathway bacterial outer membrane biogenesis; LPS lipid A biosynthesis. In terms of biological role, condensation of UDP-2,3-diacylglucosamine and 2,3-diacylglucosamine-1-phosphate to form lipid A disaccharide, a precursor of lipid A, a phosphorylated glycolipid that anchors the lipopolysaccharide to the outer membrane of the cell. This chain is Lipid-A-disaccharide synthase, found in Actinobacillus pleuropneumoniae serotype 5b (strain L20).